Consider the following 1296-residue polypeptide: Protein STU1 (1296 aa).

Disordered regions lie at residues 258 to 287 (ATSA…HGAD), 735 to 793 (LSQT…PPVT), 888 to 946 (ALQQ…HISA), and 953 to 972 (TTSH…TNGV). Residues 277-287 (RSQFNSSHGAD) show a composition bias toward polar residues. Composition is skewed to low complexity over residues 755–782 (SARS…GAAS), 900–919 (TIST…ASAS), and 933–946 (HSPS…HISA). The span at 953-964 (TTSHRVLSSTPS) shows a compositional bias: polar residues.

Belongs to the CLASP family. As to quaternary structure, interacts with microtubules.

The protein localises to the cytoplasm. It localises to the cytoskeleton. The protein resides in the nucleus. It is found in the spindle. Functionally, microtubule binding protein that promotes the stabilization of dynamic microtubules. Required for mitotic spindle formation. This is Protein STU1 (STU1) from Mycosarcoma maydis (Corn smut fungus).